We begin with the raw amino-acid sequence, 366 residues long: Polyprenyl transferase ausN (366 aa).

8 consecutive transmembrane segments (helical) span residues 97–117, 121–141, 164–184, 215–235, 239–259, 287–307, 308–328, and 346–366; these read VVGIAYSAATAPTKLPLDLLL, LLLTLWSFILRSAGCAWNDLI, LPTATIFTACLFALGCSLFLF, LILVNIAWAIPMAMHSLGVEP, ILSSICLCVFIATVIVLIDLV, LAYSLFAISTLALLFGGLLGG, LRAPFVVFSVGGHIVGFWTFL, and SCLMASIFWLLGLGIEYAVRV.

This sequence belongs to the UbiA prenyltransferase family. The cofactor is Mg(2+).

The protein localises to the membrane. It catalyses the reaction 3,5-dimethylorsellinate + (2E,6E)-farnesyl diphosphate = (3R)-3-farnesyl-6-hydroxy-2,3,5-trimethyl-4-oxocyclohexa-1,5-diene-1-carboxylate + diphosphate + H(+). It functions in the pathway secondary metabolite biosynthesis; terpenoid biosynthesis. Its function is as follows. Polyprenyl transferase; part of the gene cluster that mediates the biosynthesis of calidodehydroaustin, a fungal meroterpenoid. The first step of the pathway is the synthesis of 3,5-dimethylorsellinic acid by the polyketide synthase ausA. 3,5-dimethylorsellinic acid is then prenylated by the polyprenyl transferase ausN. Further epoxidation by the FAD-dependent monooxygenase ausM and cyclization by the probable terpene cyclase ausL lead to the formation of protoaustinoid A. Protoaustinoid A is then oxidized to spiro-lactone preaustinoid A3 by the combined action of the FAD-binding monooxygenases ausB and ausC, and the dioxygenase ausE. Acid-catalyzed keto-rearrangement and ring contraction of the tetraketide portion of preaustinoid A3 by ausJ lead to the formation of preaustinoid A4. The aldo-keto reductase ausK, with the help of ausH, is involved in the next step by transforming preaustinoid A4 into isoaustinone which is in turn hydroxylated by the P450 monooxygenase ausI to form austinolide. The cytochrome P450 monooxygenase ausG modifies austinolide to austinol. Austinol is further acetylated to austin by the O-acetyltransferase ausP, which spontaneously changes to dehydroaustin. The cytochrome P450 monooxygenase ausR then converts dehydroaustin is into 7-dehydrodehydroaustin. The hydroxylation catalyzed by ausR permits the O-acetyltransferase ausQ to add an additional acetyl group to the molecule, leading to the formation of acetoxydehydroaustin. The short chain dehydrogenase ausT catalyzes the reduction of the double bond present between carbon atoms 1 and 2 to convert 7-dehydrodehydroaustin into 1,2-dihydro-7-hydroxydehydroaustin. AusQ catalyzes not only an acetylation reaction but also the addition of the PKS ausV diketide product to 1,2-dihydro-7-hydroxydehydroaustin, forming precalidodehydroaustin. Finally, the iron/alpha-ketoglutarate-dependent dioxygenase converts precalidodehydroaustin into calidodehydroaustin. The polypeptide is Polyprenyl transferase ausN (Aspergillus calidoustus).